The chain runs to 777 residues: Cullin-3 (777 aa).

Residues 568 to 596 (YPPPKASMSNEENGPGPSSSGESMKERKP) form a disordered region. Positions 576–589 (SNEENGPGPSSSGE) are enriched in low complexity. Residues 707-769 (DRKLEVEAAI…REYLARDEHD (63 aa)) enclose the Cullin neddylation domain. Residue K721 forms a Glycyl lysine isopeptide (Lys-Gly) (interchain with G-Cter in NEDD8) linkage.

This sequence belongs to the cullin family. In terms of assembly, probable component of multiple cullin-RING-based BCB (BTB-CUL3-BTB) E3 ubiquitin-protein ligase complexes formed by cul-3, rbx-1 and a variable BTB domain-containing protein acting as both, adapter to cullin and substrate recognition component. Interacts with bath-15, bath-40, bath-41, bath-42, C17F4.8, tag-303, D2045.8, F57C2.1, ZC239.15 and B0281.5. Interacts with mel-26 (via BTB domain). Interacts with dcn-1. In terms of processing, neddylated. Deneddylated via its interaction with the COP9 signalosome (CSN) complex.

The protein resides in the cytoplasm. It localises to the nucleus. It functions in the pathway protein modification; protein ubiquitination. Functionally, probable core component of multiple cullin-RING-based BCB (BTB-CUL3-BTB) E3 ubiquitin-protein ligase complexes which mediate the ubiquitination and subsequent proteasomal degradation of target proteins. Probably acts as a scaffold protein which may contribute to catalysis through positioning of the substrate and the ubiquitin-conjugating enzyme. Required to target mei-3/katanin for degradation at the meiosis to mitosis transition via its neddylation and deneddylation. Functions in ubiquitin-mediated degradation of CKIs to target cki-1 for degradation. Regulates microtubule stability in the early embryo. In body wall muscles, involved in the organization of myosin thick filaments, likely by regulating the degradation of microtubule severing protein mei-1 downstream of unc-89. Together with spop-1, may promote the ubiquitination and proteasomal degradation of target bromodomain-containing proteins such as bet-1. This Caenorhabditis elegans protein is Cullin-3.